Here is a 176-residue protein sequence, read N- to C-terminus: Interleukin-1 receptor antagonist protein (176 aa).

The signal sequence occupies residues 1 to 25 (METCRCPLSYLISFLLFLSHSETAC). Cys-91 and Cys-141 are disulfide-bonded. An N-linked (GlcNAc...) asparagine glycan is attached at Asn-109.

Belongs to the IL-1 family.

The protein resides in the secreted. Its function is as follows. Anti-inflammatory antagonist of interleukin-1 family of proinflammatory cytokines such as interleukin-1beta/IL1B and interleukin-1alpha/IL1A. Protects from immune dysregulation and uncontrolled systemic inflammation triggered by IL1 for a range of innate stimulatory agents such as pathogens. The polypeptide is Interleukin-1 receptor antagonist protein (IL1RN) (Canis lupus familiaris (Dog)).